The primary structure comprises 409 residues: Multifunctional CCA protein (409 aa).

Residues G8 and R11 each contribute to the ATP site. The CTP site is built by G8 and R11. Residues D21 and D23 each coordinate Mg(2+). Residues R91, R137, and R140 each coordinate ATP. Positions 91, 137, and 140 each coordinate CTP. An HD domain is found at 228–329; sequence SGLHTLSVLE…LELLQSFDVY (102 aa).

Belongs to the tRNA nucleotidyltransferase/poly(A) polymerase family. Bacterial CCA-adding enzyme type 1 subfamily. As to quaternary structure, monomer. Can also form homodimers and oligomers. It depends on Mg(2+) as a cofactor. Requires Ni(2+) as cofactor.

It carries out the reaction a tRNA precursor + 2 CTP + ATP = a tRNA with a 3' CCA end + 3 diphosphate. The catalysed reaction is a tRNA with a 3' CCA end + 2 CTP + ATP = a tRNA with a 3' CCACCA end + 3 diphosphate. In terms of biological role, catalyzes the addition and repair of the essential 3'-terminal CCA sequence in tRNAs without using a nucleic acid template. Adds these three nucleotides in the order of C, C, and A to the tRNA nucleotide-73, using CTP and ATP as substrates and producing inorganic pyrophosphate. tRNA 3'-terminal CCA addition is required both for tRNA processing and repair. Also involved in tRNA surveillance by mediating tandem CCA addition to generate a CCACCA at the 3' terminus of unstable tRNAs. While stable tRNAs receive only 3'-terminal CCA, unstable tRNAs are marked with CCACCA and rapidly degraded. This Pseudomonas fluorescens (strain Pf0-1) protein is Multifunctional CCA protein.